Reading from the N-terminus, the 706-residue chain is Envelope glycoprotein H (706 aa).

A signal peptide spans 1 to 18; that stretch reads MQLLCVFCLVLLWEVGAA. Residues 19–682 lie on the Virion surface side of the membrane; the sequence is SLSEVKLHLD…LYEERAHVVL (664 aa). Asn-60 is a glycosylation site (N-linked (GlcNAc...) asparagine; by host). 2 cysteine pairs are disulfide-bonded: Cys-120-Cys-312 and Cys-278-Cys-335. Positions 165–229 are interaction with gL; sequence DKFQYTGAMT…QSGDYSLVIV (65 aa). N-linked (GlcNAc...) asparagine; by host glycosylation is present at Asn-435. 2 cysteine pairs are disulfide-bonded: Cys-454/Cys-478 and Cys-534/Cys-587. Asn-549 and Asn-604 each carry an N-linked (GlcNAc...) asparagine; by host glycan. Cys-612 and Cys-615 form a disulfide bridge. A glycan (N-linked (GlcNAc...) asparagine; by host) is linked at Asn-664. A helical transmembrane segment spans residues 683-703; that stretch reads AIILYFIAFALGIFLVHKIVM. At 704-706 the chain is on the intravirion side; that stretch reads FFL.

The protein belongs to the herpesviridae glycoprotein H family. As to quaternary structure, interacts with glycoprotein L (gL); this interaction is necessary for the correct processing and cell surface expression of gH. The heterodimer gH/gL seems to interact with gB trimers during fusion. The heterodimer gH/gL interacts with host EPHA2 to facilitate virus internalization and fusion. Interacts with glycoprotein 42/BZLF2. N-glycosylated, O-glycosylated, and sialylated.

The protein resides in the virion membrane. It localises to the host cell membrane. It is found in the host endosome membrane. The heterodimer glycoprotein H-glycoprotein L is required for the fusion of viral and plasma membranes leading to virus entry into the host cell. Following initial binding to host receptor, membrane fusion is mediated by the fusion machinery composed of gB and the heterodimer gH/gL. May also be involved in the fusion between the virion envelope and the outer nuclear membrane during virion morphogenesis. The heterodimer gH/gL targets also host EPHA2 to promote viral entry. The chain is Envelope glycoprotein H from Homo sapiens (Human).